Here is a 401-residue protein sequence, read N- to C-terminus: Chalcone synthase 4 (401 aa).

Residue C168 is part of the active site.

It belongs to the thiolase-like superfamily. Chalcone/stilbene synthases family.

The catalysed reaction is (E)-4-coumaroyl-CoA + 3 malonyl-CoA + 3 H(+) = 2',4,4',6'-tetrahydroxychalcone + 3 CO2 + 4 CoA. It participates in secondary metabolite biosynthesis; flavonoid biosynthesis. In terms of biological role, the primary product of this enzyme is 4,2',4',6'-tetrahydroxychalcone (also termed naringenin-chalcone or chalcone) which can under specific conditions spontaneously isomerize into naringenin. The chain is Chalcone synthase 4 (CHS4) from Sorghum bicolor (Sorghum).